The following is a 968-amino-acid chain: Alanine--tRNA ligase, cytoplasmic (968 aa).

Residues Arg-77, His-95, Trp-176, and 214–216 each bind ATP; that span reads IWN. Residues Asn-216 and Asp-239 each contribute to the L-alanine site. Gly-243 lines the ATP pocket. Residues His-606, His-610, Cys-724, and His-728 each coordinate Zn(2+).

It belongs to the class-II aminoacyl-tRNA synthetase family. Monomer. Zn(2+) serves as cofactor.

Its subcellular location is the cytoplasm. The catalysed reaction is tRNA(Ala) + L-alanine + ATP = L-alanyl-tRNA(Ala) + AMP + diphosphate. Functionally, catalyzes the attachment of alanine to tRNA(Ala) in a two-step reaction: alanine is first activated by ATP to form Ala-AMP and then transferred to the acceptor end of tRNA(Ala). Also edits incorrectly charged tRNA(Ala) via its editing domain. This Caenorhabditis elegans protein is Alanine--tRNA ligase, cytoplasmic.